Consider the following 283-residue polypeptide: Elongation factor Ts (283 aa).

The involved in Mg(2+) ion dislocation from EF-Tu stretch occupies residues 80 to 83 (TDFV).

Belongs to the EF-Ts family.

The protein resides in the cytoplasm. In terms of biological role, associates with the EF-Tu.GDP complex and induces the exchange of GDP to GTP. It remains bound to the aminoacyl-tRNA.EF-Tu.GTP complex up to the GTP hydrolysis stage on the ribosome. In Klebsiella pneumoniae (strain 342), this protein is Elongation factor Ts.